Consider the following 1226-residue polypeptide: Methionine synthase (1226 aa).

Positions 6–326 (RAQIEAQLKQ…EHIRHMAMAV (321 aa)) constitute a Hcy-binding domain. Cys248, Cys311, and Cys312 together coordinate Zn(2+). The region spanning 357–618 (FVNVGERTNV…VPEKLREAVE (262 aa)) is the Pterin-binding domain. The region spanning 651-745 (SALEWRTWSV…FINASKQVGS (95 aa)) is the B12-binding N-terminal domain. Residues Glu695, 757-761 (GDVHD), His760, Ser805, Thr809, and Ala861 contribute to the methylcob(III)alamin site. Residues 747-882 (NGKILLATVK…SDELRPAFVE (136 aa)) enclose the B12-binding domain. The AdoMet activation domain maps to 898–1226 (KKPRTKPVTL…EKWLGPNING (329 aa)). Residues Asp948, Arg1136, and 1191 to 1192 (YF) each bind S-adenosyl-L-methionine.

The protein belongs to the vitamin-B12 dependent methionine synthase family. Methylcob(III)alamin serves as cofactor. Zn(2+) is required as a cofactor.

It catalyses the reaction (6S)-5-methyl-5,6,7,8-tetrahydrofolate + L-homocysteine = (6S)-5,6,7,8-tetrahydrofolate + L-methionine. It functions in the pathway amino-acid biosynthesis; L-methionine biosynthesis via de novo pathway; L-methionine from L-homocysteine (MetH route): step 1/1. Catalyzes the transfer of a methyl group from methyl-cobalamin to homocysteine, yielding enzyme-bound cob(I)alamin and methionine. Subsequently, remethylates the cofactor using methyltetrahydrofolate. In Vibrio vulnificus (strain YJ016), this protein is Methionine synthase (metH).